The sequence spans 526 residues: Cytochrome P450 monooxygenase 58 (526 aa).

A run of 3 helical transmembrane segments spans residues 13-33, 115-135, and 306-326; these read IASSTIGQRILLALALGLLLI, FIMAGEILTGGMLIVFTGYGK, and IGAGAETTAASLSVFMLAMTL. Cys-451 contacts heme.

The protein belongs to the cytochrome P450 family. Heme is required as a cofactor.

The protein localises to the membrane. It participates in secondary metabolite biosynthesis. Cytochrome P450 monooxygenase that is able to use delta(6)-protoilludene as a substrate to produce delta(6)-protoilludene-8-ol. This is Cytochrome P450 monooxygenase 58 from Postia placenta (strain ATCC 44394 / Madison 698-R) (Brown rot fungus).